The following is a 232-amino-acid chain: Thiamine import ATP-binding protein ThiQ (232 aa).

The ABC transporter domain occupies 2 to 230; the sequence is LKLTDITWLY…KASASAILGI (229 aa). 32-39 contacts ATP; the sequence is GPSGAGKS.

The protein belongs to the ABC transporter superfamily. Thiamine importer (TC 3.A.1.19.1) family. As to quaternary structure, the complex is composed of two ATP-binding proteins (ThiQ), two transmembrane proteins (ThiP) and a solute-binding protein (ThiB).

The protein localises to the cell inner membrane. It catalyses the reaction thiamine(out) + ATP + H2O = thiamine(in) + ADP + phosphate + H(+). Its function is as follows. Part of the ABC transporter complex ThiBPQ involved in thiamine import. Responsible for energy coupling to the transport system. In Shigella flexneri serotype 5b (strain 8401), this protein is Thiamine import ATP-binding protein ThiQ.